The chain runs to 140 residues: MNRLLQQSVSRGPLAVRASSTITTKPPTPNQITKNNAQFDKVTHTGQAWDQSDYRLQRFDISKKSVNPNVAMHLIDQRPPEDCGDKRVVFCDGGHPALGHPKVYINLDKPGVHACGYCGNRFYNSHATKAEDMKIQHLNC.

The protein belongs to the complex I NDUFS6 subunit family. In terms of assembly, complex I is composed of 45 different subunits. This is a component of the iron-sulfur (IP) fragment of the enzyme.

The protein localises to the mitochondrion inner membrane. Functionally, accessory subunit of the mitochondrial membrane respiratory chain NADH dehydrogenase (Complex I), that is believed not to be involved in catalysis. Complex I functions in the transfer of electrons from NADH to the respiratory chain. The immediate electron acceptor for the enzyme is believed to be ubiquinone. The polypeptide is Probable NADH dehydrogenase [ubiquinone] iron-sulfur protein 6, mitochondrial (nduf-6) (Caenorhabditis elegans).